Here is a 272-residue protein sequence, read N- to C-terminus: Ethanolamine ammonia-lyase small subunit (272 aa).

3 residues coordinate adenosylcob(III)alamin: Val161, Glu182, and Cys211.

It belongs to the EutC family. In terms of assembly, the basic unit is a heterodimer which dimerizes to form tetramers. The heterotetramers trimerize; 6 large subunits form a core ring with 6 small subunits projecting outwards. The cofactor is adenosylcob(III)alamin.

The protein localises to the bacterial microcompartment. The catalysed reaction is ethanolamine = acetaldehyde + NH4(+). It functions in the pathway amine and polyamine degradation; ethanolamine degradation. Catalyzes the deamination of various vicinal amino-alcohols to oxo compounds. Allows this organism to utilize ethanolamine as the sole source of nitrogen and carbon in the presence of external vitamin B12. This is Ethanolamine ammonia-lyase small subunit from Xanthomonas campestris pv. campestris (strain B100).